A 133-amino-acid chain; its full sequence is Agglutinin alpha chain (133 aa).

Positions 1 to 133 (GKAFDDGAFT…LDYFSMYLSL (133 aa)) constitute a Jacalin-type lectin domain. Positions 7-64 (GAFTGIREINLSYNKETAIGDFQVVYDLNGSPYVGQNHKSFITGFTPVKISLDFPSEY) form a repeat. An N-linked (GlcNAc...) asparagine; when associated with variant T-45; partial glycan is attached at asparagine 43. The igA-binding stretch occupies residues 68 to 89 (VSGYTGNVSGYVVVRSLTFKTN). N-linked (GlcNAc...) asparagine; partial glycosylation is present at asparagine 74. The segment at residues 76-130 (SGYVVVRSLTFKTNKKTYGPYGVTSGTPFNLPIENGLIVGFKGSIGYWLDYFSMY) is a repeat.

This sequence belongs to the jacalin lectin family. As to quaternary structure, tetramer of four alpha chains associated with two or four beta chains.

In terms of biological role, D-galactose-specific lectin, binds the T-antigen structure Gal-beta1,3-GalNAc (Thomsen-Friedenreich-antigen-specific lectin). Potent and selective stimulant of distinct T- and B-cell functions. Shows a unique ability to specifically recognize IgA-1 from human serum. The sequence is that of Agglutinin alpha chain from Artocarpus integer (Jack fruit).